A 486-amino-acid polypeptide reads, in one-letter code: Glutamate--tRNA ligase (486 aa).

Positions 11–21 (PSPTGLLHIGN) match the 'HIGH' region motif. A 'KMSKS' region motif is present at residues 255 to 259 (KLSKR). Residue K258 participates in ATP binding.

Belongs to the class-I aminoacyl-tRNA synthetase family. Glutamate--tRNA ligase type 1 subfamily. In terms of assembly, monomer.

It localises to the cytoplasm. It catalyses the reaction tRNA(Glu) + L-glutamate + ATP = L-glutamyl-tRNA(Glu) + AMP + diphosphate. Functionally, catalyzes the attachment of glutamate to tRNA(Glu) in a two-step reaction: glutamate is first activated by ATP to form Glu-AMP and then transferred to the acceptor end of tRNA(Glu). The protein is Glutamate--tRNA ligase of Streptococcus pneumoniae serotype 19F (strain G54).